Here is a 541-residue protein sequence, read N- to C-terminus: EH domain-containing protein 4 (541 aa).

At methionine 1 the chain carries N-acetylmethionine. Residues 1 to 20 (MFSWMGRQAGGRERSGGMDA) form a disordered region. Position 15 is a phosphoserine (serine 15). The region spanning 58 to 289 (FENKPMILLV…DLFRDIQSLP (232 aa)) is the Dynamin-type G domain. A G1 motif region spans residues 68–75 (GQYSTGKT). 68-75 (GQYSTGKT) is a binding site for ATP. The G2 motif stretch occupies residues 94-95 (EP). Residues 156 to 159 (DSPG) form a G3 motif region. Position 162 is a phosphoserine (serine 162). A G4 motif region spans residues 222-225 (NKAD). ATP is bound at residue lysine 223. Valine 246 is a region of interest (G5 motif). Tryptophan 261 provides a ligand contact to ATP. The 89-residue stretch at 447–535 (DKPVYDELFY…PHLVPPSHRK (89 aa)) folds into the EH domain. Residue tyrosine 451 is modified to Phosphotyrosine. Position 459 is a phosphoserine (serine 459). The 36-residue stretch at 479-514 (LPNSVLGKIWKLADCDCDGMLDEEEFALAKHLIKIK) folds into the EF-hand domain. Residues aspartate 492, aspartate 494, aspartate 496, methionine 498, and glutamate 503 each coordinate Ca(2+).

The protein belongs to the TRAFAC class dynamin-like GTPase superfamily. Dynamin/Fzo/YdjA family. EHD subfamily. Homooligomer, and heterooligomer with EHD1, EHD2 and EHD3. Forms a complex with EHD4 and MICALL1; the complex controls CDH5 trafficking and coordinates angiogenesis.

The protein resides in the early endosome membrane. The protein localises to the recycling endosome membrane. It is found in the cell membrane. Its subcellular location is the cell junction. It localises to the adherens junction. Functionally, ATP- and membrane-binding protein that probably controls membrane reorganization/tubulation upon ATP hydrolysis. Plays a role in early endosomal transport. During sprouting angiogenesis, in complex with PACSIN2 and MICALL1, forms recycling endosome-like tubular structure at asymmetric adherens junctions to control CDH5 trafficking. This is EH domain-containing protein 4 from Mus musculus (Mouse).